A 277-amino-acid polypeptide reads, in one-letter code: Inner kinetochore subunit sim4 (277 aa).

A coiled-coil region spans residues 96-138 (NNISDLKKNLHSNKKLEAVLKEELHQIKKFSSDLQSLKSSMGE).

The protein belongs to the CENP-K/MCM22 family. In terms of assembly, component of the inner kinetochore constitutive centromere-associated network (CCAN) (also known as central kinetochore Sim4 complex in fission yeast), which is composed of at least cnl2, cnp3, cnp20, fta1, fta2, fta3, fta4, fta6, fta7, mal2, mhf1, mhf2, mis6, mis15, mis17, sim4 and wip1. Interacts with mis6 and dad1.

Its subcellular location is the nucleus. The protein localises to the chromosome. It is found in the centromere. Functionally, component of the kinetochore, a multiprotein complex that assembles on centromeric DNA and attaches chromosomes to spindle microtubules, mediating chromosome segregation and sister chromatid segregation during meiosis and mitosis. Component of the inner kinetochore constitutive centromere-associated network (CCAN), which serves as a structural platform for outer kinetochore assembly. This Schizosaccharomyces pombe (strain 972 / ATCC 24843) (Fission yeast) protein is Inner kinetochore subunit sim4 (sim4).